A 2766-amino-acid chain; its full sequence is PDZ domain-containing protein 2 (2766 aa).

The 93-residue stretch at 85–177 folds into the PDZ 1 domain; it reads LSFGNIPVFG…GGFIYLIMLR (93 aa). 2 disordered regions span residues 189–315 and 419–452; these read GNSG…KTGK and MPGS…KLKS. The span at 242–254 shows a compositional bias: acidic residues; that stretch reads TADDPNSELENGA. Over residues 280-296 the composition is skewed to basic and acidic residues; sequence HLERSEADSEVELRVPK. Positions 334 to 419 constitute a PDZ 2 domain; it reads KMELLKESDG…MVQLVVASKM (86 aa). S517 bears the Phosphoserine mark. The PDZ 3 domain occupies 535 to 621; the sequence is IIGLYKEKGK…GLFVLTVRTK (87 aa). Positions 627 to 636 are enriched in polar residues; it reads LTPCSTPTHM. The segment at 627–673 is disordered; it reads LTPCSTPTHMSRSSSPSFNTNSGGTPAGGGQEEGGSSSLGRKAPGPK. Positions 637–650 are enriched in low complexity; that stretch reads SRSSSPSFNTNSGG. In terms of domain architecture, PDZ 4 spans 679 to 764; it reads EVTLNKEPRV…GPVRLVIGRH (86 aa). The span at 783–794 shows a compositional bias: polar residues; sequence YQESREANSSPG. Disordered regions lie at residues 783 to 803 and 834 to 853; these read YQES…KSPS and AGSE…EDGS. Phosphoserine occurs at positions 891 and 895. Disordered stretches follow at residues 915–966, 990–1425, 1456–1531, 1725–1909, 1924–1967, 2015–2070, 2146–2174, 2262–2397, 2424–2450, and 2465–2496; these read NGGS…KQEE, HSIL…PSVL, ISLS…CPGT, DSQG…LPEQ, DTSC…IRQS, ERVP…ASQV, FSSH…AMGG, DRPT…ERRT, QLEI…GHAD, and TRAY…WATP. Residues 918 to 927 are compositionally biased toward acidic residues; the sequence is SDDEDFDGEG. The segment covering 1021–1038 has biased composition (basic and acidic residues); the sequence is GRKEMSGSRSSPKLEYRV. Composition is skewed to polar residues over residues 1040–1061, 1126–1137, and 1189–1220; these read TDTQ…SENL, PGDSSVPTNCGP, and SETP…SQGI. 2 stretches are compositionally biased toward low complexity: residues 1379–1393 and 1456–1471; these read SQPP…SHHA and ISLS…SPSS. S1767 carries the post-translational modification Phosphoserine. Basic residues predominate over residues 1797 to 1806; the sequence is CSPKLKRLNS. Residues 1884–1901 show a composition bias toward polar residues; the sequence is LRTSASDTSIRTFTSPLT. Composition is skewed to low complexity over residues 1924-1937 and 1947-1963; these read DTSC…PRSG and SGSA…ALAG. Composition is skewed to low complexity over residues 2280 to 2296 and 2305 to 2321; these read PPIN…GSPS and RSLS…SSLL. 2 stretches are compositionally biased toward polar residues: residues 2322–2347 and 2362–2372; these read PQMT…SNKG and PTSTVSPASPS. The 85-residue stretch at 2550–2634 folds into the PDZ 5 domain; sequence FIVLNKKEGS…HKHALMIIKK (85 aa). The interval 2635 to 2667 is disordered; it reads GNDQPGPSFKQEPPSANGKGPFPRRTLPLEPGA. The region spanning 2678–2763 is the PDZ 6 domain; the sequence is CVEVLKTSAG…GPVQLVIRKH (86 aa).

In terms of assembly, interacts with SCN10A, CTNND2 and PKP4. Post-translationally, a secreted form is produced by caspase-mediated proteolytic cleavage. As to expression, expressed in the heart, liver, brain, spleen, lung, kidney, testis and skeletal muscle.

The protein localises to the nucleus. Its subcellular location is the cytoplasm. The protein resides in the endoplasmic reticulum. It is found in the cell junction. It localises to the secreted. The chain is PDZ domain-containing protein 2 (Pdzd2) from Rattus norvegicus (Rat).